A 252-amino-acid polypeptide reads, in one-letter code: Transmembrane ascorbate-dependent reductase CYB561 (252 aa).

Methionine 1 bears the N-acetylmethionine mark. Over 1-17 (MEGPASPAPAPGALPYY) the chain is Cytoplasmic. A helical membrane pass occupies residues 18 to 38 (VAFSQLLGLTVVAMTGAWLGM). In terms of domain architecture, Cytochrome b561 spans 20 to 221 (FSQLLGLTVV…FATVVLYILT (202 aa)). Residues 39–52 (YRGGIAWESALQFN) are Vesicular-facing. A helical membrane pass occupies residues 53-73 (VHPLCMVIGLVFLQGDALLVY). Heme b contacts are provided by histidine 54, arginine 74, and lysine 81. Topologically, residues 74-86 (RVFRNEAKRTTKV) are cytoplasmic. 2 residues coordinate L-ascorbate: lysine 81 and lysine 85. The helical transmembrane segment at 87–107 (LHGLLHVFAFVIALVGLVAVF) threads the bilayer. Residues histidine 88, 117–120 (DLYS), and histidine 122 contribute to the heme b site. Residues 108–125 (EHHRKKGYADLYSLHSWC) are Vesicular-facing. A helical membrane pass occupies residues 126-146 (GILVFALFFAQWLVGFSFFLF). At 147–159 (PGASFSLRSRYRP) the chain is on the cytoplasmic side. Arginine 154 contributes to the L-ascorbate binding site. The helical transmembrane segment at 160–180 (QHVFFGAAIFLLSVATALLGL) threads the bilayer. Residues histidine 161 and glutamate 182 each coordinate heme b. Topologically, residues 181–199 (KEALLFELGTKYSTFEPEG) are vesicular. A helical transmembrane segment spans residues 200–220 (VLANVLGLLLAAFATVVLYIL). The Cytoplasmic portion of the chain corresponds to 221-252 (TRADWKRPLQAEEQALSMDFKTLTEGDSPSSQ). Lysine 226 contacts heme b. A phosphoserine mark is found at serine 248 and serine 250.

Heme b is required as a cofactor.

Its subcellular location is the cytoplasmic vesicle. It localises to the secretory vesicle. The protein localises to the chromaffin granule membrane. It catalyses the reaction monodehydro-L-ascorbate radical(out) + L-ascorbate(in) = monodehydro-L-ascorbate radical(in) + L-ascorbate(out). Functionally, transmembrane reductase that uses ascorbate as an electron donor in the cytoplasm and transfers electrons across membranes to reduce monodehydro-L-ascorbate radical in the lumen of secretory vesicles. It is therefore involved the regeneration and homeostasis within secretory vesicles of ascorbate which in turn provides reducing equivalents needed to support the activity of intravesicular enzymes. This is Transmembrane ascorbate-dependent reductase CYB561 (CYB561) from Ovis aries (Sheep).